The sequence spans 92 residues: Small ribosomal subunit protein uS19 (92 aa).

This sequence belongs to the universal ribosomal protein uS19 family.

Protein S19 forms a complex with S13 that binds strongly to the 16S ribosomal RNA. In Caulobacter sp. (strain K31), this protein is Small ribosomal subunit protein uS19.